Consider the following 261-residue polypeptide: Pyridoxine-5'-phosphate oxidase (261 aa).

A pyridoxal 5'-phosphate-binding site is contributed by 42 to 45 (RGDR). Residue 95-98 (RMLL) coordinates FMN. Lys-100 provides a ligand contact to pyridoxal 5'-phosphate. FMN is bound by residues 110-111 (FT), 116-117 (RK), and Gln-139. Residues Tyr-157, Arg-161, and Ser-165 each contribute to the pyridoxal 5'-phosphate site. FMN-binding positions include 174 to 175 (QS) and Trp-219. Residue 225 to 227 (RLH) coordinates pyridoxal 5'-phosphate. Arg-229 serves as a coordination point for FMN. Thr-238 is subject to Phosphothreonine. A Phosphoserine modification is found at Ser-241.

The protein belongs to the pyridoxamine 5'-phosphate oxidase family. Homodimer. FMN serves as cofactor. In terms of tissue distribution, ubiquitous. Expressed in liver, brain, lung, prostate and stomach (at protein level).

It catalyses the reaction pyridoxine 5'-phosphate + O2 = pyridoxal 5'-phosphate + H2O2. It carries out the reaction pyridoxamine 5'-phosphate + O2 + H2O = pyridoxal 5'-phosphate + H2O2 + NH4(+). It participates in cofactor metabolism; pyridoxal 5'-phosphate salvage; pyridoxal 5'-phosphate from pyridoxamine 5'-phosphate: step 1/1. It functions in the pathway cofactor metabolism; pyridoxal 5'-phosphate salvage; pyridoxal 5'-phosphate from pyridoxine 5'-phosphate: step 1/1. Functionally, catalyzes the oxidation of either pyridoxine 5'-phosphate (PNP) or pyridoxamine 5'-phosphate (PMP) into pyridoxal 5'-phosphate (PLP). The sequence is that of Pyridoxine-5'-phosphate oxidase (PNPO) from Homo sapiens (Human).